Reading from the N-terminus, the 524-residue chain is L-lactate permease (524 aa).

Transmembrane regions (helical) follow at residues 12 to 34 (LAVS…TVFK), 38 to 60 (IQAA…HLPF), 67 to 89 (IVQG…VWLY), 127 to 149 (LEGA…SLGF), 156 to 178 (MLCL…VGII), 193 to 215 (SMMT…IWLM), 224 to 246 (ILPA…TIFI), 250 to 267 (LADI…ALFL), 297 to 319 (WSPF…KGLL), 339 to 361 (IEVG…VTTV), 374 to 396 (SLLK…IIGI), 411 to 433 (EAVA…IGVF), and 505 to 522 (YSFG…ILSL).

The protein belongs to the lactate permease family.

It localises to the cell membrane. May play a role in L-lactate transport. The sequence is that of L-lactate permease (lctP) from Halalkalibacterium halodurans (strain ATCC BAA-125 / DSM 18197 / FERM 7344 / JCM 9153 / C-125) (Bacillus halodurans).